Consider the following 212-residue polypeptide: Protein G1-like7 (212 aa).

The segment covering 1 to 22 (MDPSGPGPSSAAAGGAPAVAAA) has biased composition (low complexity). Disordered regions lie at residues 1-34 (MDPS…RYES) and 148-212 (KARG…PSAS). Residues 31–158 (RYESQKRRDW…ARGIPYEKKK (128 aa)) enclose the ALOG domain. Positions 156-160 (KKKRK) match the Nuclear localization signal motif. Over residues 167-182 (PAGVEPSGSSSAAAAA) the composition is skewed to low complexity. The segment covering 183 to 194 (AGGGDAGSGGGA) has biased composition (gly residues). Residues 195 to 212 (AATTTAQPGGSGTAPSAS) show a composition bias toward low complexity.

This sequence belongs to the plant homeotic and developmental regulators ALOG protein family.

Its subcellular location is the nucleus. Its function is as follows. Probable transcription regulator that acts as a developmental regulator by promoting cell growth in response to light. The chain is Protein G1-like7 (G1L7) from Oryza sativa subsp. japonica (Rice).